The sequence spans 806 residues: Leucine--tRNA ligase (806 aa).

Positions 40-51 (PYPSGAGLHVGH) match the 'HIGH' region motif. Positions 578–582 (KMSKS) match the 'KMSKS' region motif. Lysine 581 contacts ATP.

This sequence belongs to the class-I aminoacyl-tRNA synthetase family.

It localises to the cytoplasm. It catalyses the reaction tRNA(Leu) + L-leucine + ATP = L-leucyl-tRNA(Leu) + AMP + diphosphate. In Staphylococcus aureus (strain MSSA476), this protein is Leucine--tRNA ligase.